The primary structure comprises 375 residues: Myb family transcription factor PHL5 (375 aa).

Over residues 159-171 (TSSQHQPKQSHPR) the composition is skewed to polar residues. The interval 159 to 178 (TSSQHQPKQSHPRFSSPPSF) is disordered. Positions 189-249 (CVNKTRIRWT…HLQKYRIAKY (61 aa)) constitute an HTH myb-type domain. Positions 220–245 (PKAILKRMDSDGLTIFHVKSHLQKYR) form a DNA-binding region, H-T-H motif. Positions 279-299 (KEALQLQLDVQRHLHEQLEIQ) form a coiled coil. The LHEQLE motif lies at 292–297 (LHEQLE).

This sequence belongs to the MYB-CC family.

It localises to the nucleus. This Arabidopsis thaliana (Mouse-ear cress) protein is Myb family transcription factor PHL5.